Reading from the N-terminus, the 136-residue chain is Large ribosomal subunit protein uL16 (136 aa).

It belongs to the universal ribosomal protein uL16 family. Part of the 50S ribosomal subunit.

In terms of biological role, binds 23S rRNA and is also seen to make contacts with the A and possibly P site tRNAs. In Haemophilus influenzae (strain 86-028NP), this protein is Large ribosomal subunit protein uL16.